A 438-amino-acid polypeptide reads, in one-letter code: Telomeric repeat-binding factor 1 (438 aa).

Residues 1–10 (MAEDVSSTAP) show a composition bias toward polar residues. Positions 1 to 36 (MAEDVSSTAPSPRGCADGRDADPTEEQMAQTQRNDQ) are disordered. The residue at position 2 (A2) is an N-acetylalanine. S11 bears the Phosphoserine mark. Residues 58–268 (EEEEEDSGLV…AAAKVVESKR (211 aa)) form a TRFH dimerization region. A Glycyl lysine isopeptide (Lys-Gly) (interchain with G-Cter in SUMO2) cross-link involves residue K213. A Phosphoserine; by ATM modification is found at S219. The interval 265–378 (ESKRTRTITS…PVTPEKHRAR (114 aa)) is interaction with RLIM. Residues 268 to 311 (RTRTITSQDKPSGNDVEMETEANLDTRKSVSDKQSAVTESSEGT) are disordered. A compositionally biased stretch (polar residues) spans 299 to 311 (DKQSAVTESSEGT). K325 participates in a covalent cross-link: Glycyl lysine isopeptide (Lys-Gly) (interchain with G-Cter in SUMO2). Residues 326-375 (LQHGTQQQDLNKKERRVGTPQSTKKKKESRRATESRIPVSKSQPVTPEKH) form a disordered region. Positions 337-356 (KKERRVGTPQSTKKKKESRR) match the Nuclear localization signal motif. K366 participates in a covalent cross-link: Glycyl lysine isopeptide (Lys-Gly) (interchain with G-Cter in SUMO2). An HTH myb-type domain is found at 375 to 432 (HRARKRQAWLWEEDKNLRSGVRKYGEGNWSKILLHYKFNNRTSVMLKDRWRTMKKLKL). The H-T-H motif DNA-binding region spans 403–428 (WSKILLHYKFNNRTSVMLKDRWRTMK).

As to quaternary structure, homodimer; can contain both isoforms. Found in a complex with POT1; TINF2 and TNKS1. Interacts with ATM, TINF2, TNKS1, TNKS2, PINX1, NEK2 and MAPRE1. Component of the shelterin complex (telosome) composed of TERF1, TERF2, TINF2, TERF2IP ACD and POT1. Interacts with RLIM (via N-terminus). Interacts with FBXO4. Interaction with TINF2 protects against interaction with FBXO4 and subsequent polyubiquitination and proteasomal degradation. Interacts with GNL3L; this interaction promotes homodimerization. Interacts with TIN2. Interactions with GNL3L and TIN2 are mutually exclusive. Interacts with RTEL1. Interacts with CCDC79/TERB1. Post-translationally, phosphorylated preferentially on Ser-219 in an ATM-dependent manner in response to ionizing DNA damage. In terms of processing, ADP-ribosylation by TNKS1 or TNKS2 diminishes its ability to bind to telomeric DNA. Ubiquitinated by RLIM/RNF12, leading to its degradation by the proteasome. Ubiquitinated by a SCF (SKP1-CUL1-F-box protein) ubiquitin-protein ligase complex, leading to its degradation by the proteasome.

Its subcellular location is the nucleus. It is found in the chromosome. It localises to the telomere. The protein localises to the cytoplasm. The protein resides in the cytoskeleton. Its subcellular location is the spindle. In terms of biological role, binds the telomeric double-stranded 5'-TTAGGG-3' repeat and negatively regulates telomere length. Involved in the regulation of the mitotic spindle. Component of the shelterin complex (telosome) that is involved in the regulation of telomere length and protection. Shelterin associates with arrays of double-stranded 5'-TTAGGG-3' repeats added by telomerase and protects chromosome ends; without its protective activity, telomeres are no longer hidden from the DNA damage surveillance and chromosome ends are inappropriately processed by DNA repair pathways. This chain is Telomeric repeat-binding factor 1 (TERF1), found in Cricetulus griseus (Chinese hamster).